Consider the following 332-residue polypeptide: Biotin synthase (332 aa).

A Radical SAM core domain is found at 53–282; sequence HFGKKVKLNM…TKEIRISGGR (230 aa). Positions 71, 75, and 78 each coordinate [4Fe-4S] cluster. Residues Cys-115, Cys-147, Cys-207, and Arg-277 each coordinate [2Fe-2S] cluster.

The protein belongs to the radical SAM superfamily. Biotin synthase family. As to quaternary structure, homodimer. The cofactor is [4Fe-4S] cluster. [2Fe-2S] cluster is required as a cofactor.

The enzyme catalyses (4R,5S)-dethiobiotin + (sulfur carrier)-SH + 2 reduced [2Fe-2S]-[ferredoxin] + 2 S-adenosyl-L-methionine = (sulfur carrier)-H + biotin + 2 5'-deoxyadenosine + 2 L-methionine + 2 oxidized [2Fe-2S]-[ferredoxin]. It functions in the pathway cofactor biosynthesis; biotin biosynthesis; biotin from 7,8-diaminononanoate: step 2/2. Functionally, catalyzes the conversion of dethiobiotin (DTB) to biotin by the insertion of a sulfur atom into dethiobiotin via a radical-based mechanism. This is Biotin synthase from Bacillus cereus (strain G9842).